The primary structure comprises 61 residues: Metallothionein-1 (61 aa).

At Met1 the chain carries N-acetylmethionine. The interval 1–29 is beta; it reads MDPNCSCSTGSTCTCSSSCGCKDCKCTSC. Residues Cys5, Cys7, Cys13, Cys15, Cys19, Cys21, Cys24, Cys26, Cys29, Cys33, Cys34, Cys36, Cys37, Cys41, Cys44, Cys48, Cys50, Cys57, Cys59, and Cys60 each contribute to the a divalent metal cation site. Positions 30-61 are alpha; sequence KKSCCSCCPVGCSKCAQGCVCKGASDKCTCCA.

This sequence belongs to the metallothionein superfamily. Type 1 family.

Functionally, metallothioneins have a high content of cysteine residues that bind various heavy metals; these proteins are transcriptionally regulated by both heavy metals and glucocorticoids. The protein is Metallothionein-1 (MT1) of Cricetulus griseus (Chinese hamster).